Consider the following 492-residue polypeptide: Adenosylhomocysteinase (492 aa).

Residues Thr68, Asp153, and Glu215 each contribute to the substrate site. 216–218 (TTT) is an NAD(+) binding site. The substrate site is built by Lys245 and Asp249. Residues Asn250, 279–284 (GYGDVG), Glu302, Asn337, 358–360 (IGH), and Asn406 each bind NAD(+).

Belongs to the adenosylhomocysteinase family. NAD(+) serves as cofactor.

The protein localises to the cytoplasm. It carries out the reaction S-adenosyl-L-homocysteine + H2O = L-homocysteine + adenosine. The protein operates within amino-acid biosynthesis; L-homocysteine biosynthesis; L-homocysteine from S-adenosyl-L-homocysteine: step 1/1. In terms of biological role, may play a key role in the regulation of the intracellular concentration of adenosylhomocysteine. The chain is Adenosylhomocysteinase from Mycobacterium ulcerans (strain Agy99).